We begin with the raw amino-acid sequence, 576 residues long: Proline--tRNA ligase (576 aa).

The protein belongs to the class-II aminoacyl-tRNA synthetase family. ProS type 1 subfamily. Homodimer.

It localises to the cytoplasm. It catalyses the reaction tRNA(Pro) + L-proline + ATP = L-prolyl-tRNA(Pro) + AMP + diphosphate. In terms of biological role, catalyzes the attachment of proline to tRNA(Pro) in a two-step reaction: proline is first activated by ATP to form Pro-AMP and then transferred to the acceptor end of tRNA(Pro). As ProRS can inadvertently accommodate and process non-cognate amino acids such as alanine and cysteine, to avoid such errors it has two additional distinct editing activities against alanine. One activity is designated as 'pretransfer' editing and involves the tRNA(Pro)-independent hydrolysis of activated Ala-AMP. The other activity is designated 'posttransfer' editing and involves deacylation of mischarged Ala-tRNA(Pro). The misacylated Cys-tRNA(Pro) is not edited by ProRS. The polypeptide is Proline--tRNA ligase (Leptospira interrogans serogroup Icterohaemorrhagiae serovar Lai (strain 56601)).